A 134-amino-acid polypeptide reads, in one-letter code: Large-conductance mechanosensitive channel (134 aa).

Helical transmembrane passes span 16 to 36 (VVDMAVGIIIGVAFGKIVSSF) and 76 to 96 (GVFLQAIFDFIIIAFAIFIAV).

Belongs to the MscL family. Homopentamer.

The protein localises to the cell inner membrane. Its function is as follows. Channel that opens in response to stretch forces in the membrane lipid bilayer. May participate in the regulation of osmotic pressure changes within the cell. The protein is Large-conductance mechanosensitive channel of Thioalkalivibrio sulfidiphilus (strain HL-EbGR7).